Consider the following 232-residue polypeptide: Small ribosomal subunit protein uS3 (232 aa).

One can recognise a KH type-2 domain in the interval 39 to 107; that stretch reads VRQYLTKELK…PAQINIAEVR (69 aa).

It belongs to the universal ribosomal protein uS3 family. Part of the 30S ribosomal subunit. Forms a tight complex with proteins S10 and S14.

Functionally, binds the lower part of the 30S subunit head. Binds mRNA in the 70S ribosome, positioning it for translation. This Aliivibrio salmonicida (strain LFI1238) (Vibrio salmonicida (strain LFI1238)) protein is Small ribosomal subunit protein uS3.